We begin with the raw amino-acid sequence, 2443 residues long: Non-reducing polyketide synthase olcA (2443 aa).

The Ketosynthase family 3 (KS3) domain occupies 5–442 (IEPIAIVGTG…GANVHAILES (438 aa)). Catalysis depends on for beta-ketoacyl synthase activity residues Cys178, His317, and His362. The tract at residues 550 to 885 (GVFTGQGAQW…AAIGSLWTYL (336 aa)) is malonyl-CoA:ACP transacylase (MAT) domain. Ser645 acts as the For acyl/malonyl transferase activity in catalysis. Residues 940-1070 (NCLLGVLSPD…GVLTMTLGSA (131 aa)) form an N-terminal hotdog fold region. The 292-residue stretch at 940–1231 (NCLLGVLSPD…LVPLLEDLAD (292 aa)) folds into the PKS/mFAS DH domain. Residues 989–1497 (ALESAKLIAG…SLPVTISNMR (509 aa)) are product template (PT) domain. The C-terminal hotdog fold stretch occupies residues 1085-1231 (MRAVDIEDFY…LVPLLEDLAD (147 aa)). Residues 1771-2159 (NKRYLAHTHV…LERFTCALPP (389 aa)) are methyltransferase (CMeT) domain. Residues 2359 to 2434 (EILTSHLLTQ…EITSSAAAKL (76 aa)) form the Carrier domain. The residue at position 2394 (Ser2394) is an O-(pantetheine 4'-phosphoryl)serine.

It catalyses the reaction nicotinyl-CoA + 2 malonyl-CoA + H(+) = 4-hydroxy-6-(pyridin-3-yl)-2H-pyran-2-one + 2 CO2 + 3 CoA. The protein operates within secondary metabolite biosynthesis; terpenoid biosynthesis. In terms of biological role, non-reducing polyketide synthase; part of the gene cluster that mediates the biosynthesis of 15-deoxyoxalicine B. The first step of the pathway is the synthesis of nicotinyl-CoA from nicotinic acid by the nicotinic acid-CoA ligase olcI. Nicotinyl-CoA is then a substrate of polyketide synthase olcA to produce 4-hydroxy-6-(3-pyridinyl)-2H-pyran-2-one (HPPO) which is further prenylated by the polyprenyl transferase olcH to yield geranylgeranyl-HPPO. Geranylgeranyl pyrophosphate is provided by the cluster-specific geranylgeranyl pyrophosphate synthase olcC. The FAD-dependent monooxygenase olcE catalyzes the epoxidation of geranylgeranyl-HPPO and the terpene cyclase olcD catalyzes the cyclization of the terpenoid component, resulting in the formation of the tricyclic terpene moiety seen in predecaturin E. The cytochrome P450 monooxygenase then catalyzes the allylic oxidation of predecaturin E, which is followed by spirocylization with concomitant loss of one molecule of water to form decaturin E. Decaturin E is the substrate of the cytochrome P450 monooxygenase olcJ which hydroxylates it at the C-29 position to form decaturin F. The short-chain dehydrogenase/reductase olcF may catalyze the oxidation of decaturin F to generate the 29-hydroxyl-27-one intermediate, and subsequent hemiacetal formation probably leads to the formation of decaturin C. The dioxygenase olcK may be a peroxisomal enzyme that catalyzes the hydroxylation of decaturin C into decaturin A once decaturin C is shuttled into the peroxisome by the MFS transporter olcL. Finally the cytochrome P450 monooxygenase olcB catalyzes the oxidative rearrangement to yield 15-deoxyoxalicine B. In the absence of olcJ, decaturin E may be shunted to a pathway in which it is oxidized to a ketone, possibly by olcF, to form decaturin D, which undergoes further allylic oxidation to yield decaturin G. Moreover, in the absence of oclK or oclL, oclB can convert decaturin C into 15-deoxyoxalicine A. In Penicillium canescens, this protein is Non-reducing polyketide synthase olcA.